Here is a 346-residue protein sequence, read N- to C-terminus: Protein RecA (346 aa).

Gly-65–Thr-72 is a binding site for ATP.

It belongs to the RecA family.

The protein localises to the cytoplasm. In terms of biological role, can catalyze the hydrolysis of ATP in the presence of single-stranded DNA, the ATP-dependent uptake of single-stranded DNA by duplex DNA, and the ATP-dependent hybridization of homologous single-stranded DNAs. It interacts with LexA causing its activation and leading to its autocatalytic cleavage. The sequence is that of Protein RecA from Enterococcus hirae (strain ATCC 9790 / DSM 20160 / JCM 8729 / LMG 6399 / NBRC 3181 / NCIMB 6459 / NCDO 1258 / NCTC 12367 / WDCM 00089 / R).